Here is a 99-residue protein sequence, read N- to C-terminus: HTH-type transcriptional regulator YgaV (99 aa).

Residues 7–99 (LQASAEQAAA…IATLKNVYCP (93 aa)) form the HTH arsR-type domain. The H-T-H motif DNA-binding region spans 41–64 (AGELTRITGLSASATSQHLARMRD).

Its activity is regulated as follows. In the presence of H(2)S, two cysteine residues form an intramolecular tetrasulfide bond, which attenuates the binding of YgaV to DNA. Both unmodified YgaV and sulfide-modified YgaV can probably function as either a repressor or an activator. Binds heme, which may influence the DNA-binding affinity. Functionally, transcriptional regulator that regulates large-scale gene expression in response to sulfide. May act as a global regulator responsible for redox homeostasis. It functions as both a repressor and an activator. In the absence of sulfide compounds, it negatively regulates many anaerobic respiratory genes, including formate, fumarate, lactate, nitrate and nitrite reductase genes. In the presence of hydrogen sulfide (H(2)S), YgaV activity is attenuated, leading to the expression of anaerobic respiratory and ROS scavenging genes, which contributes to redox homeostasis, reactive oxygen species (ROS) scavenging and antibiotic tolerance. It responds to H(2)O(2) scavenging and increases antibiotic tolerance under H(2)S-atmospheric conditions. It also negatively regulates its own expression by binding to the ygaVP promoter region. May also be involved in regulatory mechanisms that operate independently of sulfide. This is HTH-type transcriptional regulator YgaV (ygaV) from Escherichia coli (strain K12).